The primary structure comprises 1516 residues: AP-4 complex accessory subunit RUSC2 (1516 aa).

Disordered stretches follow at residues 33 to 105 (AGGG…PFLL), 202 to 224 (LDECGGPGGSGSGGGASDTSGFS), 229 to 248 (WKLSSDESPRNPGCSGSGDQ), 331 to 351 (SKMSYESHHPESGGREGGYGC), 404 to 445 (LSSQ…PSEY), and 478 to 511 (GQVYTNTSPPNLSTGRQRSRSYDRSLQRSPPVRL). Residues 66–81 (LFSSLHSTPGGTARSI) show a composition bias toward polar residues. Residues 82–92 (DSTKSRSRDGR) are compositionally biased toward basic and acidic residues. A compositionally biased stretch (gly residues) spans 206-217 (GGPGGSGSGGGA). A compositionally biased stretch (basic and acidic residues) spans 333 to 344 (MSYESHHPESGG). The span at 405 to 420 (SSQSSPSPAGSSITSC) shows a compositional bias: low complexity. Residues 428 to 440 (SPPPGPGPDPGPS) show a composition bias toward pro residues. Positions 480 to 493 (VYTNTSPPNLSTGR) are enriched in polar residues. 3 positions are modified to phosphoserine: Ser536, Ser543, and Ser559. Disordered regions lie at residues 550–588 (GRKKTGGSGSPPLRVSVGDSSQEFSPIQEAQQDRGAPLD), 646–688 (LMDP…KEQR), 727–836 (RTQQ…PQKE), and 868–889 (ESLARGGGEGSMATRPSNANHL). The segment covering 567–579 (GDSSQEFSPIQEA) has biased composition (polar residues). Ser656 is modified (phosphoserine). Positions 729–746 (QQPAPLAAPAAQVSVPAP) are enriched in low complexity. The residue at position 781 (Ser781) is a Phosphoserine. Over residues 791 to 801 (PSTDSSASTSC) the composition is skewed to low complexity. The region spanning 1031-1175 (NVGHLVLKYL…LPFSLDLLFQ (145 aa)) is the RUN domain. Disordered stretches follow at residues 1210-1261 (RARG…GRAR), 1286-1408 (IEGS…LPSD), and 1422-1449 (QTVGSRREPEPKESLQEPHSPALPSSPP). Basic and acidic residues predominate over residues 1219–1230 (DVDRAAQGERVK). Positions 1237–1251 (GGEEEEEEEETEEVA) are enriched in acidic residues. The segment covering 1355–1364 (ELRRSREREG) has biased composition (basic and acidic residues). Phosphoserine is present on residues Ser1368 and Ser1380. The segment covering 1426-1437 (SRREPEPKESLQ) has biased composition (basic and acidic residues). The region spanning 1447 to 1506 (SPPCEVQALCHHLATGPGQLSFHKGDILRVLGRAGGDWLRCSRGPDSGLVPLAYVTLTPT) is the SH3 domain.

In terms of assembly, associated component of the adapter-like complex 4 (AP-4). Interacts with active RAB1A and RAB1B, and with GOLGA2. Interacts (via RUN domain) with RAB35 (GTP-bound form); the interaction recruits RUSC2 to the plasma membrane. As to expression, widely expressed, with highest levels in brain and testis.

It is found in the cytoplasm. Its subcellular location is the cytosol. The protein localises to the cell membrane. Associates with the adapter-like complex 4 (AP-4) and may therefore play a role in vesicular trafficking of proteins at the trans-Golgi network. This Homo sapiens (Human) protein is AP-4 complex accessory subunit RUSC2.